The primary structure comprises 433 residues: Signal recognition particle 54 kDa protein (433 aa).

Residues 106 to 113, 186 to 190, and 244 to 247 each bind GTP; these read GVEGSGKT, DTAGR, and TKMD.

It belongs to the GTP-binding SRP family. SRP54 subfamily. Part of the signal recognition particle protein translocation system, which is composed of SRP and FtsY. Archaeal SRP consists of a 7S RNA molecule of 300 nucleotides and two protein subunits: SRP54 and SRP19.

It localises to the cytoplasm. It catalyses the reaction GTP + H2O = GDP + phosphate + H(+). In terms of biological role, involved in targeting and insertion of nascent membrane proteins into the cytoplasmic membrane. Binds to the hydrophobic signal sequence of the ribosome-nascent chain (RNC) as it emerges from the ribosomes. The SRP-RNC complex is then targeted to the cytoplasmic membrane where it interacts with the SRP receptor FtsY. In Pyrobaculum aerophilum (strain ATCC 51768 / DSM 7523 / JCM 9630 / CIP 104966 / NBRC 100827 / IM2), this protein is Signal recognition particle 54 kDa protein.